Reading from the N-terminus, the 766-residue chain is LPS-assembly protein LptD (766 aa).

The N-terminal stretch at 1–18 is a signal peptide; the sequence is MNIRYLLLLSLMPHLVWA.

The protein belongs to the LptD family. As to quaternary structure, component of the lipopolysaccharide transport and assembly complex. Interacts with LptE and LptA.

It is found in the cell outer membrane. Together with LptE, is involved in the assembly of lipopolysaccharide (LPS) at the surface of the outer membrane. The protein is LPS-assembly protein LptD of Shewanella denitrificans (strain OS217 / ATCC BAA-1090 / DSM 15013).